The sequence spans 262 residues: Probable ketoamine kinase TTHA1179 (262 aa).

Residue 79-81 coordinates ATP; that stretch reads AYL. The Proton acceptor role is filled by Asp172.

Belongs to the fructosamine kinase family.

The enzyme catalyses N(6)-(D-ribulosyl)-L-lysine + ATP = N(6)-(3-O-phospho-D-ribulosyl)-L-lysine + ADP + H(+). It catalyses the reaction N(6)-(D-erythrulosyl)-L-lysine + ATP = N(6)-(3-O-phospho-D-erythrulosyl)-L-lysine + ADP + H(+). It carries out the reaction N(6)-D-ribulosyl-L-lysyl-[protein] + ATP = N(6)-(3-O-phospho-D-ribulosyl)-L-lysyl-[protein] + ADP + H(+). The catalysed reaction is N(6)-(D-erythrulosyl)-L-lysyl-[protein] + ATP = N(6)-(3-O-phospho-D-erythrulosyl)-L-lysyl-[protein] + ADP + H(+). Its function is as follows. Ketoamine kinase that phosphorylates ketoamines, such as erythruloselysine and ribuloselysine, on the third carbon of the sugar moiety to generate ketoamine 3-phosphate. Has higher activity on free lysine (erythruloselysine and ribuloselysine), than on ribuloselysine and erythruloselysine residues on glycated proteins. The chain is Probable ketoamine kinase TTHA1179 from Thermus thermophilus (strain ATCC 27634 / DSM 579 / HB8).